The sequence spans 357 residues: Protein BUR2 (357 aa).

In terms of assembly, belongs to the BUR kinase complex.

Its subcellular location is the nucleus. Component of the BUR kinase complex involved in transcription regulation. This complex phosphorylates the UBC2/RAD6 ubiquitin-conjugating enzyme (E2), leading to monoubiquitination of histone H2B and the silencing of telomeric-associated genes. Also required for histone H3 methylation. Necessary for the recovery from pheromone-induced growth arrest in the cell cycle G1 phase. The kinase activity of the complex requires the presence of BUR2. Overexpression of BUR2 interferes with mitotic chromosome segregation. This chain is Protein BUR2 (BUR2), found in Candida glabrata (strain ATCC 2001 / BCRC 20586 / JCM 3761 / NBRC 0622 / NRRL Y-65 / CBS 138) (Yeast).